Reading from the N-terminus, the 248-residue chain is 4-hydroxy-tetrahydrodipicolinate reductase (248 aa).

An NAD(+)-binding site is contributed by D28. Residue K29 participates in NADP(+) binding. Residues 78-80 (ATT) and 102-105 (SYNM) each bind NAD(+). The Proton donor/acceptor role is filled by H134. Residue H135 coordinates (S)-2,3,4,5-tetrahydrodipicolinate. K138 serves as the catalytic Proton donor. (S)-2,3,4,5-tetrahydrodipicolinate is bound at residue 144–145 (GT).

The protein belongs to the DapB family.

It is found in the cytoplasm. It catalyses the reaction (S)-2,3,4,5-tetrahydrodipicolinate + NAD(+) + H2O = (2S,4S)-4-hydroxy-2,3,4,5-tetrahydrodipicolinate + NADH + H(+). It carries out the reaction (S)-2,3,4,5-tetrahydrodipicolinate + NADP(+) + H2O = (2S,4S)-4-hydroxy-2,3,4,5-tetrahydrodipicolinate + NADPH + H(+). It functions in the pathway amino-acid biosynthesis; L-lysine biosynthesis via DAP pathway; (S)-tetrahydrodipicolinate from L-aspartate: step 4/4. Its function is as follows. Catalyzes the conversion of 4-hydroxy-tetrahydrodipicolinate (HTPA) to tetrahydrodipicolinate. This is 4-hydroxy-tetrahydrodipicolinate reductase from Exiguobacterium sibiricum (strain DSM 17290 / CCUG 55495 / CIP 109462 / JCM 13490 / 255-15).